A 264-amino-acid chain; its full sequence is Apolipoprotein A-I (264 aa).

An N-terminal signal peptide occupies residues 1–18 (MKAVVLAVAVLFLTGSQA). 2 tandem repeats follow at residues 67-88 (LNLLANWNTLTSTFNNLREQLG) and 89-110 (SVTKEFWDNLGEDTVWLRQQMN). Residues 67 to 264 (LNLLANWNTL…DQASKQLSAQ (198 aa)) form a 10 X approximate tandem repeats region. A Methionine sulfoxide modification is found at Met-109. The 3; half-length repeat unit spans residues 111-121 (KDLEEVKQKVQ). 5 consecutive repeat copies span residues 122 to 142 (SYLDNFQKKVNEEVERYRDKV), 144 to 165 (PLGKELHKDAQQKLKELQEKLA), 166 to 187 (PLGQDIRQRAREYVDALRTHLG), 188 to 208 (SYTQGMRQGLAKRLEALKESA), and 209 to 229 (PVSEYQVKASKHLKTFSEKAK). At Met-193 the chain carries Methionine sulfoxide. Residues 230–240 (PALEDLRQGLM) form a 9; half-length repeat. The residue at position 240 (Met-240) is a Methionine sulfoxide. Copy 10 of the repeat occupies 241–264 (PVMESLKASFLSSIDQASKQLSAQ).

Belongs to the apolipoprotein A1/A4/E family. As to quaternary structure, homodimer. Interacts with APOA1BP and CLU. Component of a sperm activating protein complex (SPAP), consisting of APOA1, an immunoglobulin heavy chain, an immunoglobulin light chain and albumin. Interacts with NDRG1. Interacts with SCGB3A2. Interacts with NAXE and YJEFN3. Glycosylated. Post-translationally, palmitoylated. In terms of processing, phosphorylation sites are present in the extracellular medium. Major protein of plasma HDL, also found in chylomicrons.

It localises to the secreted. Its function is as follows. Participates in the reverse transport of cholesterol from tissues to the liver for excretion by promoting cholesterol efflux from tissues and by acting as a cofactor for the lecithin cholesterol acyltransferase (LCAT). As part of the SPAP complex, activates spermatozoa motility. This Heterocephalus glaber (Naked mole rat) protein is Apolipoprotein A-I (Apoa1).